Reading from the N-terminus, the 658-residue chain is Squalene--hopene cyclase (658 aa).

The stretch at 69–110 (EAKIGRYLRRIQGEHGGWSLFYGGDLDLSATVKAYFALKMIG) is one PFTB 1 repeat. The active-site Proton donor is the D392. PFTB repeat units lie at residues 418 to 459 (KARA…GALL), 486 to 526 (MKAA…NVAA), and 534 to 584 (IQKA…GLMA).

It belongs to the terpene cyclase/mutase family.

It is found in the cell membrane. The catalysed reaction is squalene = hop-22(29)-ene. It carries out the reaction squalene + H2O = hopan-22-ol. It participates in secondary metabolite biosynthesis; hopanoid biosynthesis. Its function is as follows. Catalyzes the cyclization of squalene into hopene. This Zymomonas mobilis subsp. mobilis (strain ATCC 31821 / ZM4 / CP4) protein is Squalene--hopene cyclase (shc).